Here is a 901-residue protein sequence, read N- to C-terminus: Protein translocase subunit SecA (901 aa).

Residues Q85, 103 to 107 (GEGKT), and D510 each bind ATP. A disordered region spans residues 847 to 901 (TRINQNNLPVDENSQTTQNSETEDYSDRRIGRNEPCPCGSGKKYKHCHGSRVARQ). Polar residues predominate over residues 848-866 (RINQNNLPVDENSQTTQNS). Positions 882, 884, 893, and 894 each coordinate Zn(2+). Positions 888–901 (KKYKHCHGSRVARQ) are enriched in basic residues.

The protein belongs to the SecA family. As to quaternary structure, monomer and homodimer. Part of the essential Sec protein translocation apparatus which comprises SecA, SecYEG and auxiliary proteins SecDF-YajC and YidC. The cofactor is Zn(2+).

Its subcellular location is the cell inner membrane. It localises to the cytoplasm. It carries out the reaction ATP + H2O + cellular proteinSide 1 = ADP + phosphate + cellular proteinSide 2.. Its function is as follows. Part of the Sec protein translocase complex. Interacts with the SecYEG preprotein conducting channel. Has a central role in coupling the hydrolysis of ATP to the transfer of proteins into and across the cell membrane, serving both as a receptor for the preprotein-SecB complex and as an ATP-driven molecular motor driving the stepwise translocation of polypeptide chains across the membrane. In Haemophilus influenzae (strain PittGG), this protein is Protein translocase subunit SecA.